Consider the following 314-residue polypeptide: DNA-directed RNA polymerase subunit alpha (314 aa).

The interval 1–228 (MIEIEKPKIE…EHLNIFVGLT (228 aa)) is alpha N-terminal domain (alpha-NTD). Residues 245-314 (KEKVLEMTIE…ELGLSLRKDD (70 aa)) are alpha C-terminal domain (alpha-CTD).

This sequence belongs to the RNA polymerase alpha chain family. As to quaternary structure, homodimer. The RNAP catalytic core consists of 2 alpha, 1 beta, 1 beta' and 1 omega subunit. When a sigma factor is associated with the core the holoenzyme is formed, which can initiate transcription.

The catalysed reaction is RNA(n) + a ribonucleoside 5'-triphosphate = RNA(n+1) + diphosphate. In terms of biological role, DNA-dependent RNA polymerase catalyzes the transcription of DNA into RNA using the four ribonucleoside triphosphates as substrates. The protein is DNA-directed RNA polymerase subunit alpha of Geobacillus kaustophilus (strain HTA426).